A 160-amino-acid chain; its full sequence is uncharacterized protein (160 aa).

Residues 1–27 (MVIGRKAGIIIYVMHALLLLLLSFTFA) form the signal peptide.

This is an uncharacterized protein from Aquifex aeolicus (strain VF5).